Here is a 247-residue protein sequence, read N- to C-terminus: Pulmonary surfactant-associated protein A (247 aa).

An N-terminal signal peptide occupies residues 1 to 15 (MLLLSLALTLISAPA). The region spanning 27 to 99 (GSPGIPGTPG…PGERGPPGLP (73 aa)) is the Collagen-like domain. Pro-29, Pro-32, Pro-35, Pro-41, Pro-53, Pro-56, Pro-62, Pro-66, and Pro-69 each carry 4-hydroxyproline. Residues 30–100 (GIPGTPGSHG…GERGPPGLPA (71 aa)) form a disordered region. Positions 41–50 (PGRDGRDGVK) are enriched in basic and acidic residues. Positions 53–64 (PGPPGPMGPPGG) are enriched in pro residues. The segment covering 83–92 (ERGDKGEPGE) has biased composition (basic and acidic residues). The C-type lectin domain occupies 132 to 247 (AVGEKIFSTN…LQYRLVICEF (116 aa)). 2 cysteine pairs are disulfide-bonded: Cys-154–Cys-245 and Cys-223–Cys-237. A glycan (N-linked (GlcNAc...) asparagine) is linked at Asn-206. Residues Glu-214, Arg-216, Asn-233, and Asp-234 each coordinate Ca(2+).

The protein belongs to the SFTPA family. Oligomeric complex of 6 set of homotrimers.

It is found in the secreted. The protein resides in the extracellular space. It localises to the extracellular matrix. Its subcellular location is the surface film. Its function is as follows. In presence of calcium ions, it binds to surfactant phospholipids and contributes to lower the surface tension at the air-liquid interface in the alveoli of the mammalian lung and is essential for normal respiration. Enhances the expression of MYO18A/SP-R210 on alveolar macrophages. In Oryctolagus cuniculus (Rabbit), this protein is Pulmonary surfactant-associated protein A (SFTPA1).